The following is a 73-amino-acid chain: Maltose-binding periplasmic protein (73 aa).

Residues 1–30 (MMTKTNLKMGARTLALSVLATLVLSASALA) form the signal peptide.

It belongs to the bacterial solute-binding protein 1 family.

It is found in the periplasm. In terms of biological role, involved in the high-affinity maltose membrane transport system. Initial receptor for the active transport of and chemotaxis toward maltooligosaccharides. This chain is Maltose-binding periplasmic protein (malE), found in Photorhabdus luminescens (Xenorhabdus luminescens).